The primary structure comprises 711 residues: Polyribonucleotide nucleotidyltransferase (711 aa).

Mg(2+) contacts are provided by Asp486 and Asp492. Residues 553–612 (PRIHTIKINPDKIKDVIGKGGSVIRALTEETGTTIEIEDDGTVKIAATDGEKAKHAIRRI) enclose the KH domain. The S1 motif domain occupies 622–690 (GRVYTGKVTR…RQGRIRLSIK (69 aa)). The tract at residues 689–711 (IKEATEQSQPAAAPEAPAAEQGE) is disordered. Low complexity predominate over residues 694–711 (EQSQPAAAPEAPAAEQGE).

This sequence belongs to the polyribonucleotide nucleotidyltransferase family. In terms of assembly, component of the RNA degradosome, which is a multiprotein complex involved in RNA processing and mRNA degradation. Requires Mg(2+) as cofactor.

The protein localises to the cytoplasm. It carries out the reaction RNA(n+1) + phosphate = RNA(n) + a ribonucleoside 5'-diphosphate. Involved in mRNA degradation. Catalyzes the phosphorolysis of single-stranded polyribonucleotides processively in the 3'- to 5'-direction. The chain is Polyribonucleotide nucleotidyltransferase from Shigella flexneri serotype 5b (strain 8401).